Here is a 97-residue protein sequence, read N- to C-terminus: Aspartyl/glutamyl-tRNA(Asn/Gln) amidotransferase subunit C (97 aa).

The tract at residues 68 to 97 (ETGFTQEEALSNAPQQSQGQFRTPKVVESA) is disordered. The segment covering 70 to 88 (GFTQEEALSNAPQQSQGQF) has biased composition (polar residues).

Belongs to the GatC family. As to quaternary structure, heterotrimer of A, B and C subunits.

It catalyses the reaction L-glutamyl-tRNA(Gln) + L-glutamine + ATP + H2O = L-glutaminyl-tRNA(Gln) + L-glutamate + ADP + phosphate + H(+). The catalysed reaction is L-aspartyl-tRNA(Asn) + L-glutamine + ATP + H2O = L-asparaginyl-tRNA(Asn) + L-glutamate + ADP + phosphate + 2 H(+). Functionally, allows the formation of correctly charged Asn-tRNA(Asn) or Gln-tRNA(Gln) through the transamidation of misacylated Asp-tRNA(Asn) or Glu-tRNA(Gln) in organisms which lack either or both of asparaginyl-tRNA or glutaminyl-tRNA synthetases. The reaction takes place in the presence of glutamine and ATP through an activated phospho-Asp-tRNA(Asn) or phospho-Glu-tRNA(Gln). This Akkermansia muciniphila (strain ATCC BAA-835 / DSM 22959 / JCM 33894 / BCRC 81048 / CCUG 64013 / CIP 107961 / Muc) protein is Aspartyl/glutamyl-tRNA(Asn/Gln) amidotransferase subunit C.